A 242-amino-acid polypeptide reads, in one-letter code: DnaJ homolog subfamily B member 3 (242 aa).

Residues 1–69 enclose the J domain; the sequence is MANYYEVLGV…KKRDVYDRYG (69 aa).

In terms of tissue distribution, testis specific.

In terms of biological role, may operate as a co-chaperone of the male germ cell- and haploid stage-specific Hsp70 proteins. In Macaca fuscata fuscata (Japanese macaque), this protein is DnaJ homolog subfamily B member 3 (DNAJB3).